Here is a 401-residue protein sequence, read N- to C-terminus: Formate-dependent phosphoribosylglycinamide formyltransferase (401 aa).

N(1)-(5-phospho-beta-D-ribosyl)glycinamide contacts are provided by residues 22–23 and Glu-82; that span reads EL. Residues Arg-115, Lys-157, 162 to 167, 197 to 200, and Glu-205 contribute to the ATP site; these read SSGKGQ and EGFI. Residues 120 to 315 enclose the ATP-grasp domain; the sequence is RLAAESLGLP…EFELHARAIL (196 aa). Mg(2+) is bound by residues Glu-274 and Glu-286. N(1)-(5-phospho-beta-D-ribosyl)glycinamide is bound by residues Asp-293, Lys-362, and 369-370; that span reads RR.

Belongs to the PurK/PurT family. As to quaternary structure, homodimer.

It carries out the reaction N(1)-(5-phospho-beta-D-ribosyl)glycinamide + formate + ATP = N(2)-formyl-N(1)-(5-phospho-beta-D-ribosyl)glycinamide + ADP + phosphate + H(+). Its pathway is purine metabolism; IMP biosynthesis via de novo pathway; N(2)-formyl-N(1)-(5-phospho-D-ribosyl)glycinamide from N(1)-(5-phospho-D-ribosyl)glycinamide (formate route): step 1/1. In terms of biological role, involved in the de novo purine biosynthesis. Catalyzes the transfer of formate to 5-phospho-ribosyl-glycinamide (GAR), producing 5-phospho-ribosyl-N-formylglycinamide (FGAR). Formate is provided by PurU via hydrolysis of 10-formyl-tetrahydrofolate. In Cupriavidus necator (strain ATCC 17699 / DSM 428 / KCTC 22496 / NCIMB 10442 / H16 / Stanier 337) (Ralstonia eutropha), this protein is Formate-dependent phosphoribosylglycinamide formyltransferase.